Here is a 919-residue protein sequence, read N- to C-terminus: Isoleucine--tRNA ligase (919 aa).

Residues 57–67 (PYANGDIHMGT) carry the 'HIGH' region motif. Residue E552 coordinates L-isoleucyl-5'-AMP. The 'KMSKS' region motif lies at 593-597 (KMSKS). K596 contacts ATP. Positions 886, 889, 906, and 909 each coordinate Zn(2+).

This sequence belongs to the class-I aminoacyl-tRNA synthetase family. IleS type 1 subfamily. In terms of assembly, monomer. Zn(2+) is required as a cofactor.

Its subcellular location is the cytoplasm. The catalysed reaction is tRNA(Ile) + L-isoleucine + ATP = L-isoleucyl-tRNA(Ile) + AMP + diphosphate. Its function is as follows. Catalyzes the attachment of isoleucine to tRNA(Ile). As IleRS can inadvertently accommodate and process structurally similar amino acids such as valine, to avoid such errors it has two additional distinct tRNA(Ile)-dependent editing activities. One activity is designated as 'pretransfer' editing and involves the hydrolysis of activated Val-AMP. The other activity is designated 'posttransfer' editing and involves deacylation of mischarged Val-tRNA(Ile). In Petrotoga mobilis (strain DSM 10674 / SJ95), this protein is Isoleucine--tRNA ligase.